The chain runs to 265 residues: Cyclin-B2-5 (265 aa).

The protein belongs to the cyclin family. Cyclin AB subfamily.

This chain is Cyclin-B2-5 (CYCB2-5), found in Arabidopsis thaliana (Mouse-ear cress).